A 279-amino-acid polypeptide reads, in one-letter code: Undecaprenyl-diphosphatase (279 aa).

The next 8 helical transmembrane spans lie at Thr-17–Phe-37, Ala-46–Leu-66, Phe-92–Leu-112, Ser-123–Val-143, Ile-156–Val-176, Ala-197–Tyr-217, Glu-226–Ile-246, and Ser-257–Val-277.

This sequence belongs to the UppP family.

The protein resides in the cell inner membrane. It catalyses the reaction di-trans,octa-cis-undecaprenyl diphosphate + H2O = di-trans,octa-cis-undecaprenyl phosphate + phosphate + H(+). Functionally, catalyzes the dephosphorylation of undecaprenyl diphosphate (UPP). Confers resistance to bacitracin. This chain is Undecaprenyl-diphosphatase, found in Leptospira biflexa serovar Patoc (strain Patoc 1 / ATCC 23582 / Paris).